The primary structure comprises 519 residues: Cytochrome P450 88A1 (519 aa).

A helical transmembrane segment spans residues 1–21 (MLGVGMAAAVLLGAVALLLAD). Cys-466 lines the heme pocket.

Belongs to the cytochrome P450 family. The cofactor is heme. As to expression, expressed in roots, developing leaves, the vegetative meristem, and suspension culture cells.

The protein localises to the membrane. It participates in plant hormone biosynthesis; gibberellin biosynthesis. The protein is Cytochrome P450 88A1 (CYP88A1) of Zea mays (Maize).